The following is a 309-amino-acid chain: Coenzyme PQQ synthesis protein B (309 aa).

Belongs to the PqqB family.

The protein operates within cofactor biosynthesis; pyrroloquinoline quinone biosynthesis. May be involved in the transport of PQQ or its precursor to the periplasm. This chain is Coenzyme PQQ synthesis protein B, found in Bradyrhizobium diazoefficiens (strain JCM 10833 / BCRC 13528 / IAM 13628 / NBRC 14792 / USDA 110).